A 131-amino-acid chain; its full sequence is MSSGGKGKASSETKSSSRSSKAGLQFPVGRIHRLLKKGNYAQRIGSGAPVYLAAVLEYLAAEILELAGNAARDNKKSRIVPRHLQLAVRNDEELNKLLGSVVISQGGVLPHIMAELLPVKTKGKAKASQEV.

The tract at residues 1-24 is disordered; sequence MSSGGKGKASSETKSSSRSSKAGL. N6-acetyllysine is present on residues Lys-6 and Lys-8. Over residues 8 to 23 the composition is skewed to low complexity; sequence KASSETKSSSRSSKAG. At Gln-105 the chain carries N5-methylglutamine. Phosphoserine is present on Ser-128. The short motif at 128–129 is the [ST]-Q motif element; it reads SQ.

This sequence belongs to the histone H2A family. As to quaternary structure, the nucleosome is a histone octamer containing two molecules each of H2A, H2B, H3 and H4 assembled in one H3-H4 heterotetramer and two H2A-H2B heterodimers. The octamer wraps approximately 147 bp of DNA. In terms of processing, phosphorylated to form H2AS128ph (gamma-H2A) in response to DNA double-strand breaks (DSBs) generated by exogenous genotoxic agents and by stalled replication forks. Phosphorylation is dependent on the DNA damage checkpoint kinases MEC1/ATR and TEL1/ATM, spreads on either side of a detected DSB site and may mark the surrounding chromatin for recruitment of proteins required for DNA damage signaling and repair. Gamma-H2A is removed from the DNA prior to the strand invasion-primer extension step of the repair process and subsequently dephosphorylated. Dephosphorylation is necessary for efficient recovery from the DNA damage checkpoint. Post-translationally, acetylated by ESA1 to form H2AK4ac and H2AK7ac.

The protein localises to the nucleus. It localises to the chromosome. Its function is as follows. Core component of nucleosome which plays a central role in DNA double strand break (DSB) repair. Nucleosomes wrap and compact DNA into chromatin, limiting DNA accessibility to the cellular machineries which require DNA as a template. Histones thereby play a central role in transcription regulation, DNA repair, DNA replication and chromosomal stability. DNA accessibility is regulated via a complex set of post-translational modifications of histones, also called histone code, and nucleosome remodeling. This is Histone H2A (HTA1) from Cryptococcus neoformans var. neoformans serotype D (strain B-3501A) (Filobasidiella neoformans).